The sequence spans 338 residues: 3-isopropylmalate dehydrogenase (338 aa).

Substrate contacts are provided by R88, R98, R122, and D212. Positions 212, 236, and 240 each coordinate Mg(2+). G272–D284 is an NAD(+) binding site.

Belongs to the isocitrate and isopropylmalate dehydrogenases family. LeuB type 2 subfamily. In terms of assembly, homodimer. It depends on Mg(2+) as a cofactor. Requires Mn(2+) as cofactor.

The protein resides in the cytoplasm. It catalyses the reaction (2R,3S)-3-isopropylmalate + NAD(+) = 4-methyl-2-oxopentanoate + CO2 + NADH. It participates in amino-acid biosynthesis; L-leucine biosynthesis; L-leucine from 3-methyl-2-oxobutanoate: step 3/4. Catalyzes the oxidation of 3-carboxy-2-hydroxy-4-methylpentanoate (3-isopropylmalate) to 3-carboxy-4-methyl-2-oxopentanoate. The product decarboxylates to 4-methyl-2 oxopentanoate. In Corynebacterium jeikeium (strain K411), this protein is 3-isopropylmalate dehydrogenase.